Here is a 428-residue protein sequence, read N- to C-terminus: Enolase (428 aa).

(2R)-2-phosphoglycerate is bound at residue Gln-163. Glu-205 acts as the Proton donor in catalysis. Residues Asp-242, Glu-286, and Asp-313 each coordinate Mg(2+). (2R)-2-phosphoglycerate is bound by residues Lys-338, Arg-367, Ser-368, and Lys-389. Lys-338 acts as the Proton acceptor in catalysis.

This sequence belongs to the enolase family. The cofactor is Mg(2+).

It localises to the cytoplasm. The protein localises to the secreted. Its subcellular location is the cell surface. The enzyme catalyses (2R)-2-phosphoglycerate = phosphoenolpyruvate + H2O. It functions in the pathway carbohydrate degradation; glycolysis; pyruvate from D-glyceraldehyde 3-phosphate: step 4/5. Its function is as follows. Catalyzes the reversible conversion of 2-phosphoglycerate (2-PG) into phosphoenolpyruvate (PEP). It is essential for the degradation of carbohydrates via glycolysis. The sequence is that of Enolase from Syntrophus aciditrophicus (strain SB).